A 1034-amino-acid polypeptide reads, in one-letter code: Teashirt homolog 2 (1034 aa).

The segment at 1–90 (MPRRKQQAPK…NESLLSDASD (90 aa)) is disordered. The stretch at 13 to 38 (AGYAQEEQLKEEEEIKEEEEEEDSGS) forms a coiled coil. Acidic residues predominate over residues 21-36 (LKEEEEIKEEEEEEDS). Polar residues predominate over residues 65–90 (SYQNSPGSHLSNQDAENESLLSDASD). K188 is covalently cross-linked (Glycyl lysine isopeptide (Lys-Gly) (interchain with G-Cter in SUMO2)). 2 C2H2-type zinc fingers span residues 215–239 (FRCR…ETGH) and 275–299 (LKCM…KTKH). A disordered region spans residues 239-265 (HYQDDNRKKDKLRPTSYSKPRKRAFQD). Residues K306 and K315 each participate in a glycyl lysine isopeptide (Lys-Gly) (interchain with G-Cter in SUMO2) cross-link. The C2H2-type 3; atypical zinc finger occupies 380-404 (LKCMECGSSHDTLQQLTTHMMVTGH). K417 is covalently cross-linked (Glycyl lysine isopeptide (Lys-Gly) (interchain with G-Cter in SUMO2)). The span at 432-455 (LSEAPNSDSLAPKPSSNSASDCTA) shows a compositional bias: polar residues. Residues 432–496 (LSEAPNSDSL…PLQKPLDPTI (65 aa)) form a disordered region. Residues 459 to 482 (ELKKESKKERPEETSKDEKVVKSE) are compositionally biased toward basic and acidic residues. Residues K461, K480, K497, K601, and K652 each participate in a glycyl lysine isopeptide (Lys-Gly) (interchain with G-Cter in SUMO2) cross-link. Disordered regions lie at residues 598–676 (TQVK…TSAL) and 763–789 (QPID…PPQK). Positions 600–668 (VKKESEDKDE…KEGSEKEKPQ (69 aa)) are enriched in basic and acidic residues. Glycyl lysine isopeptide (Lys-Gly) (interchain with G-Cter in SUMO2) cross-links involve residues K800 and K820. The segment at residues 841 to 911 (RKGRQSNWNP…NVKYQLRKTG (71 aa)) is a DNA-binding region (homeobox; atypical). A C2H2-type 4 zinc finger spans residues 926 to 948 (FYCSDCASQFRTPSTYISHLESH). K966 participates in a covalent cross-link: Glycyl lysine isopeptide (Lys-Gly) (interchain with G-Cter in SUMO2). S980 bears the Phosphoserine mark. The C2H2-type 5 zinc-finger motif lies at 994-1017 (FKCKLCCRTFVSKHAVKLHLSKTH). Positions 1014–1034 (SKTHSKSPEHHSQFVTDVDEE) are disordered.

Belongs to the teashirt C2H2-type zinc-finger protein family. In terms of assembly, interacts (via homeobox domain) with APBB1 (via PID domain 1). Post-translationally, sumoylated. As to expression, expressed in brain; strongly reduced in post-mortem elderly subjects with Alzheimer disease.

The protein localises to the nucleus. In terms of biological role, probable transcriptional regulator involved in developmental processes. May act as a transcriptional repressor (Potential). In Homo sapiens (Human), this protein is Teashirt homolog 2 (TSHZ2).